The sequence spans 555 residues: Inositol 1,4,5-trisphosphate receptor-interacting protein-like 1 (555 aa).

The N-terminal stretch at 1–24 (MNVDAEASMAVISLLFLAVMYVVH) is a signal peptide. The Extracellular segment spans residues 25 to 103 (HPLMVSDRMD…WPFQADGQEG (79 aa)). Residues 38-74 (LARSRQLEKRMSEEMRLLEMEFEERKRAAEQRQKAEN) adopt a coiled-coil conformation. The helical transmembrane segment at 104-124 (PLGWMLGNLWNTGLFCLFLVF) threads the bilayer. The Cytoplasmic segment spans residues 125-555 (ELLRQNMQHE…LPHAPLAAAP (431 aa)).

This sequence belongs to the ITPRIP family. Expressed in testis and tumoral cells.

The protein resides in the cell membrane. In terms of biological role, functions as a ligand of CD3E, inhibiting TCR-CD3 complex signaling to regulate T cell activation. Induces stable CD3E-NCK1 binding, thereby preventing the CD3E-ZAP70 interaction and subsequently inhibiting the activation of the downstream ERK-NFkB signaling cascade and calcium influx. The sequence is that of Inositol 1,4,5-trisphosphate receptor-interacting protein-like 1 from Homo sapiens (Human).